A 554-amino-acid polypeptide reads, in one-letter code: Glutamine--tRNA ligase (554 aa).

The 'HIGH' region motif lies at 34-44 (PEPNGYLHIGH). ATP contacts are provided by residues 35 to 37 (EPN) and 41 to 47 (HIGHAKS). Positions 67 and 212 each coordinate L-glutamine. ATP-binding positions include T231, 261–262 (RL), and 269–271 (MSK). The short motif at 268–272 (VMSKR) is the 'KMSKS' region element. The tract at residues 317 to 324 (TKQDNTIE) is interaction with tRNA.

Belongs to the class-I aminoacyl-tRNA synthetase family. In terms of assembly, monomer.

The protein resides in the cytoplasm. The enzyme catalyses tRNA(Gln) + L-glutamine + ATP = L-glutaminyl-tRNA(Gln) + AMP + diphosphate. This is Glutamine--tRNA ligase from Escherichia coli O7:K1 (strain IAI39 / ExPEC).